The primary structure comprises 146 residues: Putative inactive cytochrome P450 2G1 (146 aa).

Cys-91 contacts heme.

Belongs to the cytochrome P450 family. Requires heme as cofactor.

This chain is Putative inactive cytochrome P450 2G1 (CYP2G1P), found in Homo sapiens (Human).